Consider the following 105-residue polypeptide: Small ribosomal subunit protein uS10 (105 aa).

This sequence belongs to the universal ribosomal protein uS10 family. As to quaternary structure, part of the 30S ribosomal subunit.

Its function is as follows. Involved in the binding of tRNA to the ribosomes. The sequence is that of Small ribosomal subunit protein uS10 from Synechocystis sp. (strain ATCC 27184 / PCC 6803 / Kazusa).